The chain runs to 247 residues: tRNA (guanine-N(7)-)-methyltransferase (247 aa).

Residues G70, 93-94 (EI), 128-129 (NA), and L148 contribute to the S-adenosyl-L-methionine site. D151 is an active-site residue. Residue 226-228 (SEE) coordinates S-adenosyl-L-methionine.

The protein belongs to the class I-like SAM-binding methyltransferase superfamily. TrmB family.

The protein localises to the nucleus. The enzyme catalyses guanosine(46) in tRNA + S-adenosyl-L-methionine = N(7)-methylguanosine(46) in tRNA + S-adenosyl-L-homocysteine. It participates in tRNA modification; N(7)-methylguanine-tRNA biosynthesis. In terms of biological role, catalyzes the formation of N(7)-methylguanine at position 46 (m7G46) in tRNA. The chain is tRNA (guanine-N(7)-)-methyltransferase from Drosophila virilis (Fruit fly).